The sequence spans 153 residues: Ribonuclease H (153 aa).

An RNase H type-1 domain is found at 1–142 (MTPEVVIYTD…ADALARKGLS (142 aa)). Mg(2+) contacts are provided by Asp-10, Glu-48, Asp-70, and Asp-134.

It belongs to the RNase H family. As to quaternary structure, monomer. Mg(2+) serves as cofactor.

The protein localises to the cytoplasm. The catalysed reaction is Endonucleolytic cleavage to 5'-phosphomonoester.. In terms of biological role, endonuclease that specifically degrades the RNA of RNA-DNA hybrids. In Phenylobacterium zucineum (strain HLK1), this protein is Ribonuclease H.